We begin with the raw amino-acid sequence, 331 residues long: Fructose-1,6-bisphosphatase class 1 2 (331 aa).

Mg(2+) is bound by residues glutamate 91, aspartate 112, leucine 114, and aspartate 115. Substrate is bound by residues 115–118 (DGSS), asparagine 207, tyrosine 238, and lysine 268. Mg(2+) is bound at residue glutamate 274.

This sequence belongs to the FBPase class 1 family. In terms of assembly, homotetramer. Mg(2+) serves as cofactor.

The protein localises to the cytoplasm. The catalysed reaction is beta-D-fructose 1,6-bisphosphate + H2O = beta-D-fructose 6-phosphate + phosphate. It participates in carbohydrate biosynthesis; Calvin cycle. This chain is Fructose-1,6-bisphosphatase class 1 2, found in Acaryochloris marina (strain MBIC 11017).